The sequence spans 270 residues: Urease accessory protein UreD (270 aa).

This sequence belongs to the UreD family. UreD, UreF and UreG form a complex that acts as a GTP-hydrolysis-dependent molecular chaperone, activating the urease apoprotein by helping to assemble the nickel containing metallocenter of UreC. The complex may form in the order UreABCD, UreABCDF, UreABCDFG. The UreE protein probably delivers the nickel in a GTPase-dependent fashion.

The protein resides in the cytoplasm. In terms of biological role, necessary for the functional incorporation of the urease nickel metallocenter. This chain is Urease accessory protein UreD, found in Klebsiella aerogenes (Enterobacter aerogenes).